The following is an 82-amino-acid chain: Small ribosomal subunit protein uS17 (82 aa).

The protein belongs to the universal ribosomal protein uS17 family. Part of the 30S ribosomal subunit.

One of the primary rRNA binding proteins, it binds specifically to the 5'-end of 16S ribosomal RNA. The polypeptide is Small ribosomal subunit protein uS17 (Shewanella piezotolerans (strain WP3 / JCM 13877)).